We begin with the raw amino-acid sequence, 525 residues long: Pre-mRNA-processing factor 19 homolog 2 (525 aa).

In terms of domain architecture, U-box spans 1-70 (MNCAISGEVP…PKTLHTASIP (70 aa)). WD repeat units follow at residues 220–261 (TNKP…STLT), 262–301 (GHSKKVTSVKFVGDSDLVLTASADKTVRIWRNPGDGNYAC), 307–346 (DHSAEVRAVTVHPTNKYFVSASLDGTWCFYDLSSGSCLAQ), 351–390 (SKNVDYTAAAFHPDGLILGTGTSQSVVKIWDVKSQANVAK), 393–431 (GHTGEVTAISFSENGYFLATAAEDGVRLWDLRKLRNFKS), 433–469 (LSADANSVEFDPSGSYLGIAASDIKVYQTASVKAEWN), and 478–517 (SGTGKATCVKFGSDAQYVAVGSMDRNLRIFGLPGDEKANV). A DWD box motif is present at residues 409–424 (FLATAAEDGVRLWDLR).

This sequence belongs to the WD repeat PRP19 family. Homotetramer. Component of the multiprotein assembly MOS4-associated complex (MAC) at least composed of MOS4, CDC5, PRL1 and PRP19 which is related to the PRP19C/Prp19 complex/NTC/Nineteen complex identified in other organisms. Associated with the spliceosome.

It localises to the nucleus. It carries out the reaction S-ubiquitinyl-[E2 ubiquitin-conjugating enzyme]-L-cysteine + [acceptor protein]-L-lysine = [E2 ubiquitin-conjugating enzyme]-L-cysteine + N(6)-ubiquitinyl-[acceptor protein]-L-lysine.. It participates in protein modification; protein ubiquitination. Functionally, probable ubiquitin-protein ligase which is mainly involved pre-mRNA splicing and DNA repair. Component of the MAC complex that probably regulates defense responses through transcriptional control and thereby is essential for plant innate immunity. This is Pre-mRNA-processing factor 19 homolog 2 (PRP19B) from Arabidopsis thaliana (Mouse-ear cress).